The sequence spans 238 residues: Ribitol-5-phosphate cytidylyltransferase (238 aa).

CTP is bound by residues 7-10 (LAGG) and 81-87 (GDDRNHT).

The protein belongs to the IspD/TarI cytidylyltransferase family. TarI subfamily.

The catalysed reaction is D-ribitol 5-phosphate + CTP + H(+) = CDP-L-ribitol + diphosphate. It functions in the pathway cell wall biogenesis; poly(ribitol phosphate) teichoic acid biosynthesis. Catalyzes the transfer of the cytidylyl group of CTP to D-ribitol 5-phosphate. This Staphylococcus epidermidis (strain ATCC 35984 / DSM 28319 / BCRC 17069 / CCUG 31568 / BM 3577 / RP62A) protein is Ribitol-5-phosphate cytidylyltransferase.